The primary structure comprises 323 residues: Fructose-1,6-bisphosphatase class 1 (323 aa).

Glutamate 88, aspartate 107, leucine 109, and aspartate 110 together coordinate Mg(2+). Substrate-binding positions include 110–113 and asparagine 200; that span reads DGSS. Mg(2+) is bound at residue glutamate 272.

Belongs to the FBPase class 1 family. Homotetramer. Mg(2+) is required as a cofactor.

The protein localises to the cytoplasm. The enzyme catalyses beta-D-fructose 1,6-bisphosphate + H2O = beta-D-fructose 6-phosphate + phosphate. It functions in the pathway carbohydrate biosynthesis; gluconeogenesis. This Acinetobacter baumannii (strain ATCC 17978 / DSM 105126 / CIP 53.77 / LMG 1025 / NCDC KC755 / 5377) protein is Fructose-1,6-bisphosphatase class 1.